The chain runs to 334 residues: Heat-inducible transcription repressor HrcA (334 aa).

This sequence belongs to the HrcA family.

In terms of biological role, negative regulator of class I heat shock genes (grpE-dnaK-dnaJ and groELS operons). Prevents heat-shock induction of these operons. This chain is Heat-inducible transcription repressor HrcA, found in Albidiferax ferrireducens (strain ATCC BAA-621 / DSM 15236 / T118) (Rhodoferax ferrireducens).